The primary structure comprises 509 residues: Citrinin biosynthesis transcriptional activator mrl3 (509 aa).

The interval 1–22 (MASTAHRQPSRPTTRQRQRTGR) is disordered. The segment at residues 24-51 (CEECRRRKLRCDGQQPRCGVCVDSGVTC) is a DNA-binding region (zn(2)-C6 fungal-type). A disordered region spans residues 97–143 (STPLTNDHHDGCSVSSASSRSDSNPPPTVSEPDMSLPNTTTSVSSAP). The segment covering 109 to 119 (SVSSASSRSDS) has biased composition (low complexity). The segment covering 132 to 143 (LPNTTTSVSSAP) has biased composition (polar residues).

The protein localises to the nucleus. Its function is as follows. Transcription factor that regulates the expression of the gene cluster that mediates the biosynthesis of the mycotoxin citrinin, a hepato-nephrotoxic compound to humans due to inhibition of respiration complex III. This is Citrinin biosynthesis transcriptional activator mrl3 from Monascus ruber (Mold).